Reading from the N-terminus, the 347-residue chain is Methylthioribose-1-phosphate isomerase (347 aa).

Substrate is bound by residues arginine 47–alanine 49, arginine 90, and glutamine 199. The active-site Proton donor is aspartate 240. Residue asparagine 250–lysine 251 participates in substrate binding.

This sequence belongs to the eIF-2B alpha/beta/delta subunits family. MtnA subfamily.

The catalysed reaction is 5-(methylsulfanyl)-alpha-D-ribose 1-phosphate = 5-(methylsulfanyl)-D-ribulose 1-phosphate. Its pathway is amino-acid biosynthesis; L-methionine biosynthesis via salvage pathway; L-methionine from S-methyl-5-thio-alpha-D-ribose 1-phosphate: step 1/6. Catalyzes the interconversion of methylthioribose-1-phosphate (MTR-1-P) into methylthioribulose-1-phosphate (MTRu-1-P). The sequence is that of Methylthioribose-1-phosphate isomerase from Natranaerobius thermophilus (strain ATCC BAA-1301 / DSM 18059 / JW/NM-WN-LF).